Here is a 330-residue protein sequence, read N- to C-terminus: ATP-dependent (S)-NAD(P)H-hydrate dehydratase (330 aa).

The YjeF C-terminal domain maps to 36–327 (VIPLVRNTIP…QEINSAFKKL (292 aa)). Residues G136 and 189–195 (NFMEFTR) contribute to the (6S)-NADPHX site. Residues 229–233 (KGEED) and 248–257 (GSGRRCGGQG) each bind ATP. D258 serves as a coordination point for (6S)-NADPHX.

Belongs to the NnrD/CARKD family. Requires Mg(2+) as cofactor.

It carries out the reaction (6S)-NADHX + ATP = ADP + phosphate + NADH + H(+). The catalysed reaction is (6S)-NADPHX + ATP = ADP + phosphate + NADPH + H(+). In terms of biological role, catalyzes the dehydration of the S-form of NAD(P)HX at the expense of ATP, which is converted to ADP. Together with NAD(P)HX epimerase, which catalyzes the epimerization of the S- and R-forms, the enzyme allows the repair of both epimers of NAD(P)HX, a damaged form of NAD(P)H that is a result of enzymatic or heat-dependent hydration. The polypeptide is ATP-dependent (S)-NAD(P)H-hydrate dehydratase (Danio rerio (Zebrafish)).